We begin with the raw amino-acid sequence, 167 residues long: Peroxiredoxin Pen c 3 (167 aa).

Residues 3–167 (LKAGDSFPEG…SRADHVLKQL (165 aa)) enclose the Thioredoxin domain. Cys60 functions as the Cysteine sulfenic acid (-SOH) intermediate in the catalytic mechanism.

Belongs to the peroxiredoxin family. Prx5 subfamily. Homodimer; disulfide-linked, upon oxidation.

It catalyses the reaction a hydroperoxide + [thioredoxin]-dithiol = an alcohol + [thioredoxin]-disulfide + H2O. Thiol-specific peroxidase that catalyzes the reduction of hydrogen peroxide and organic hydroperoxides to water and alcohols, respectively. Plays a role in cell protection against oxidative stress by detoxifying peroxides and as sensor of hydrogen peroxide-mediated signaling events. The polypeptide is Peroxiredoxin Pen c 3 (Penicillium citrinum).